Consider the following 354-residue polypeptide: Ferrochelatase (354 aa).

Fe cation contacts are provided by H214 and E295.

The protein belongs to the ferrochelatase family.

It is found in the cytoplasm. The enzyme catalyses heme b + 2 H(+) = protoporphyrin IX + Fe(2+). It participates in porphyrin-containing compound metabolism; protoheme biosynthesis; protoheme from protoporphyrin-IX: step 1/1. Functionally, catalyzes the ferrous insertion into protoporphyrin IX. The sequence is that of Ferrochelatase from Burkholderia vietnamiensis (strain G4 / LMG 22486) (Burkholderia cepacia (strain R1808)).